A 152-amino-acid polypeptide reads, in one-letter code: Membrane-spanning 4-domains subfamily A member 13 (152 aa).

The next 4 membrane-spanning stretches (helical) occupy residues 1-21 (MIGIFHIFMWYFLLVLYMGQI), 32-52 (TYKTGCTLWGIFFIIAGVFLI), 66-86 (TLIINIICIITTITAVTLTII), and 111-131 (ILLFFYGLEFSIALTHSIYSC).

Belongs to the MS4A family.

It localises to the membrane. Functionally, may be involved in signal transduction as a component of a multimeric receptor complex. The polypeptide is Membrane-spanning 4-domains subfamily A member 13 (MS4A13) (Homo sapiens (Human)).